The primary structure comprises 338 residues: Glycerol-3-phosphate dehydrogenase [NAD(P)+] (338 aa).

NADPH contacts are provided by Ser-13, Trp-14, and Lys-108. Residues Lys-108, Gly-139, and Ser-141 each contribute to the sn-glycerol 3-phosphate site. Ala-143 provides a ligand contact to NADPH. Positions 194, 247, 257, 258, and 259 each coordinate sn-glycerol 3-phosphate. The active-site Proton acceptor is Lys-194. Arg-258 lines the NADPH pocket. Val-282 and Glu-284 together coordinate NADPH.

It belongs to the NAD-dependent glycerol-3-phosphate dehydrogenase family.

The protein resides in the cytoplasm. The catalysed reaction is sn-glycerol 3-phosphate + NAD(+) = dihydroxyacetone phosphate + NADH + H(+). It catalyses the reaction sn-glycerol 3-phosphate + NADP(+) = dihydroxyacetone phosphate + NADPH + H(+). The protein operates within membrane lipid metabolism; glycerophospholipid metabolism. In terms of biological role, catalyzes the reduction of the glycolytic intermediate dihydroxyacetone phosphate (DHAP) to sn-glycerol 3-phosphate (G3P), the key precursor for phospholipid synthesis. The polypeptide is Glycerol-3-phosphate dehydrogenase [NAD(P)+] (Streptococcus suis (strain 98HAH33)).